Consider the following 382-residue polypeptide: PqqA peptide cyclase (382 aa).

Residues 8–223 (VKPPLWLLAE…VHRYREKMAA (216 aa)) form the Radical SAM core domain. [4Fe-4S] cluster contacts are provided by cysteine 22, cysteine 26, and cysteine 29.

Belongs to the radical SAM superfamily. PqqE family. As to quaternary structure, interacts with PqqD. The interaction is necessary for activity of PqqE. It depends on [4Fe-4S] cluster as a cofactor.

It catalyses the reaction [PQQ precursor protein] + S-adenosyl-L-methionine = E-Y cross-linked-[PQQ precursor protein] + 5'-deoxyadenosine + L-methionine + H(+). It participates in cofactor biosynthesis; pyrroloquinoline quinone biosynthesis. Functionally, catalyzes the cross-linking of a glutamate residue and a tyrosine residue in the PqqA protein as part of the biosynthesis of pyrroloquinoline quinone (PQQ). In Erwinia tasmaniensis (strain DSM 17950 / CFBP 7177 / CIP 109463 / NCPPB 4357 / Et1/99), this protein is PqqA peptide cyclase.